We begin with the raw amino-acid sequence, 202 residues long: Nucleoside triphosphate pyrophosphatase (202 aa).

Residue aspartate 79 is the Proton acceptor of the active site.

Belongs to the Maf family. It depends on a divalent metal cation as a cofactor.

The protein localises to the cytoplasm. It carries out the reaction a ribonucleoside 5'-triphosphate + H2O = a ribonucleoside 5'-phosphate + diphosphate + H(+). The enzyme catalyses a 2'-deoxyribonucleoside 5'-triphosphate + H2O = a 2'-deoxyribonucleoside 5'-phosphate + diphosphate + H(+). Its function is as follows. Nucleoside triphosphate pyrophosphatase. May have a dual role in cell division arrest and in preventing the incorporation of modified nucleotides into cellular nucleic acids. This Rhodopseudomonas palustris (strain HaA2) protein is Nucleoside triphosphate pyrophosphatase.